Consider the following 158-residue polypeptide: Ribosomal RNA large subunit methyltransferase H (158 aa).

Residues Leu76, Gly107, and 126 to 131 contribute to the S-adenosyl-L-methionine site; that span reads LSGLTM.

This sequence belongs to the RNA methyltransferase RlmH family. In terms of assembly, homodimer.

It localises to the cytoplasm. The catalysed reaction is pseudouridine(1915) in 23S rRNA + S-adenosyl-L-methionine = N(3)-methylpseudouridine(1915) in 23S rRNA + S-adenosyl-L-homocysteine + H(+). Its function is as follows. Specifically methylates the pseudouridine at position 1915 (m3Psi1915) in 23S rRNA. This is Ribosomal RNA large subunit methyltransferase H from Teredinibacter turnerae (strain ATCC 39867 / T7901).